A 447-amino-acid polypeptide reads, in one-letter code: Chitobiosyldiphosphodolichol beta-mannosyltransferase (447 aa).

Over 1–8 (MSVFGFDN) the chain is Lumenal. Residues 9–29 (IPTWLWWLLAIYLATPFVLYV) form a helical membrane-spanning segment. Residues 30–127 (VQPYLFYEGK…LCSMFWKLRA (98 aa)) are Cytoplasmic-facing. An intramembrane region (helical) is located at residues 128 to 148 (VDYILLQNPPTIPILPIAVVV). At 149 to 447 (KTFSRAKLII…ALSELKIIHK (299 aa)) the chain is on the lumenal side.

Belongs to the glycosyltransferase group 1 family.

The protein resides in the endoplasmic reticulum membrane. The enzyme catalyses an N,N'-diacetylchitobiosyl-diphospho-di-trans,poly-cis-dolichol + GDP-alpha-D-mannose = a beta-D-Man-(1-&gt;4)-beta-D-GlcNAc-(1-&gt;4)-alpha-D-GlcNAc-diphospho-di-trans,poly-cis-dolichol + GDP + H(+). Its pathway is protein modification; protein glycosylation. Its function is as follows. Participates in the formation of the lipid-linked precursor oligosaccharide for N-glycosylation. Involved in assembling the dolichol-pyrophosphate-GlcNAc(2)-Man(5) intermediate on the cytoplasmic surface of the ER. This Kluyveromyces lactis (strain ATCC 8585 / CBS 2359 / DSM 70799 / NBRC 1267 / NRRL Y-1140 / WM37) (Yeast) protein is Chitobiosyldiphosphodolichol beta-mannosyltransferase (ALG1).